Consider the following 224-residue polypeptide: Thiamine-triphosphatase (224 aa).

N-acetylalanine is present on alanine 2. A CYTH domain is found at 5 to 201 (LIEVERKFTP…AKLLVYLQRF (197 aa)). Residues glutamate 7 and glutamate 9 each contribute to the Mg(2+) site. Residues lysine 11, arginine 55, arginine 57, lysine 65, and arginine 125 each coordinate substrate. Positions 145, 157, and 159 each coordinate Mg(2+). Glutamate 157 is a substrate binding site. Lysine 193 is a binding site for substrate.

It belongs to the ThTPase family. As to quaternary structure, monomer. Mg(2+) serves as cofactor.

The protein resides in the cytoplasm. It catalyses the reaction thiamine triphosphate + H2O = thiamine diphosphate + phosphate + H(+). Hydrolase highly specific for thiamine triphosphate (ThTP). The protein is Thiamine-triphosphatase (Thtpa) of Rattus norvegicus (Rat).